The chain runs to 402 residues: NAD-dependent protein deacetylase sirtuin-7 (402 aa).

Disordered stretches follow at residues 1–25 (MAAG…REEQ) and 59–78 (VTEL…RQEE). Residues 9-25 (RSERKAAERVRRLREEQ) are compositionally biased toward basic and acidic residues. Residues 83–330 (PEELRRKVRE…RLLMDELGLE (248 aa)) enclose the Deacetylase sirtuin-type domain. NAD(+) contacts are provided by residues 108–127 (GAGI…NGVW) and 168–171 (QNCD). The active-site Proton acceptor is the His188. Zn(2+) contacts are provided by Cys196, Cys199, Cys226, and Cys229. NAD(+)-binding positions include 269–271 (GSS), 298–300 (NLQ), and Cys316. A disordered region spans residues 355–385 (SHSRKSLCRSREEPPPGDQSAPLASATPILG). Arg390 is subject to Asymmetric dimethylarginine; alternate. Position 390 is an omega-N-methylarginine; alternate (Arg390).

This sequence belongs to the sirtuin family. Class IV subfamily. Interacts with UBTF and the RNA polymerase I complex. Interacts with components of the B-WICH complex, such as MYBBP1A, SMARCA5/SNF2H and BAZ1B/WSTF. Interacts with ELK4, leading to stabilization at target promoters for H3K18Ac deacetylation. Interacts with histone H2A and/or histone H2B. Interacts with DNMT1. Interacts with SIRT1. It depends on Zn(2+) as a cofactor. Phosphorylated during mitosis. Post-translationally, methylation at Arg-390 by PRMT6 inhibits the H3K18Ac histone deacetylase activity, promoting mitochondria biogenesis and maintaining mitochondria respiration. In terms of processing, ubiquitinated via 'Lys-63'-linked ubiquitin chains. Deubiquitinated by USP7, inhibiting the H3K18Ac histone deacetylase activity and regulating gluconeogenesis. Ubiquitinated by E3 ubiquitin-protein ligase complex containing FBXO7; leading to proteasomal degradation.

It is found in the nucleus. Its subcellular location is the nucleolus. The protein localises to the nucleoplasm. It localises to the chromosome. The protein resides in the cytoplasm. The enzyme catalyses N(6)-acetyl-L-lysyl-[protein] + NAD(+) + H2O = 2''-O-acetyl-ADP-D-ribose + nicotinamide + L-lysyl-[protein]. The catalysed reaction is N(6)-glutaryl-L-lysyl-[protein] + NAD(+) + H2O = 2''-O-glutaryl-ADP-D-ribose + nicotinamide + L-lysyl-[protein]. It catalyses the reaction N(6)-succinyl-L-lysyl-[protein] + NAD(+) + H2O = 2''-O-succinyl-ADP-D-ribose + nicotinamide + L-lysyl-[protein]. It carries out the reaction N(6)-propanoyl-L-lysyl-[protein] + NAD(+) + H2O = 3''-O-propanoyl-ADP-D-ribose + nicotinamide + L-lysyl-[protein]. The enzyme catalyses N(6)-decanoyl-L-lysyl-[protein] + NAD(+) + H2O = 2''-O-decanoyl-ADP-D-ribose + nicotinamide + L-lysyl-[protein]. With respect to regulation, NAD-dependent protein-lysine deacetylase and deacylase activities are activated by nucleic acids. Histone deacetylase activity is activated by DNA. Protein-lysine deacylase activity is activated by RNA. H3K18Ac histone deacetylase activity is inhibited by methylation at Arg-390. H3K18Ac histone deacetylase activity is inhibited by deubiquitination by USP7. NAD-dependent protein-lysine deacylase that can act both as a deacetylase or deacylase (desuccinylase, depropionylase, deglutarylase and dedecanoylase), depending on the context. Specifically mediates deacetylation of histone H3 at 'Lys-18' (H3K18Ac). In contrast to other histone deacetylases, displays strong preference for a specific histone mark, H3K18Ac, directly linked to control of gene expression. H3K18Ac is mainly present around the transcription start site of genes and has been linked to activation of nuclear hormone receptors; SIRT7 thereby acts as a transcription repressor. Moreover, H3K18 hypoacetylation has been reported as a marker of malignancy in various cancers and seems to maintain the transformed phenotype of cancer cells. Also able to mediate deacetylation of histone H3 at 'Lys-36' (H3K36Ac) in the context of nucleosomes. Also mediates deacetylation of non-histone proteins, such as ATM, CDK9, DDX21, DDB1, FBL, FKBP5/FKBP51, GABPB1, RAN, RRP9/U3-55K and POLR1E/PAF53. Enriched in nucleolus where it stimulates transcription activity of the RNA polymerase I complex. Acts by mediating the deacetylation of the RNA polymerase I subunit POLR1E/PAF53, thereby promoting the association of RNA polymerase I with the rDNA promoter region and coding region. In response to metabolic stress, SIRT7 is released from nucleoli leading to hyperacetylation of POLR1E/PAF53 and decreased RNA polymerase I transcription. Required to restore the transcription of ribosomal RNA (rRNA) at the exit from mitosis. Promotes pre-ribosomal RNA (pre-rRNA) cleavage at the 5'-terminal processing site by mediating deacetylation of RRP9/U3-55K, a core subunit of the U3 snoRNP complex. Mediates 'Lys-37' deacetylation of Ran, thereby regulating the nuclear export of NF-kappa-B subunit RELA/p65. Acts as a regulator of DNA damage repair by mediating deacetylation of ATM during the late stages of DNA damage response, promoting ATM dephosphorylation and deactivation. Suppresses the activity of the DCX (DDB1-CUL4-X-box) E3 ubiquitin-protein ligase complexes by mediating deacetylation of DDB1, which prevents the interaction between DDB1 and CUL4 (CUL4A or CUL4B). Activates RNA polymerase II transcription by mediating deacetylation of CDK9, thereby promoting 'Ser-2' phosphorylation of the C-terminal domain (CTD) of RNA polymerase II. Deacetylates FBL, promoting histone-glutamine methyltransferase activity of FBL. Acts as a regulator of mitochondrial function by catalyzing deacetylation of GABPB1. Regulates Akt/AKT1 activity by mediating deacetylation of FKBP5/FKBP51. Required to prevent R-loop-associated DNA damage and transcription-associated genomic instability by mediating deacetylation and subsequent activation of DDX21, thereby overcoming R-loop-mediated stalling of RNA polymerases. In addition to protein deacetylase activity, also acts as a protein-lysine deacylase. Acts as a protein depropionylase by mediating depropionylation of Osterix (SP7), thereby regulating bone formation by osteoblasts. Acts as a histone deglutarylase by mediating deglutarylation of histone H4 on 'Lys-91' (H4K91glu); a mark that destabilizes nucleosomes by promoting dissociation of the H2A-H2B dimers from nucleosomes. Acts as a histone desuccinylase: in response to DNA damage, recruited to DNA double-strand breaks (DSBs) and catalyzes desuccinylation of histone H3 on 'Lys-122' (H3K122succ), thereby promoting chromatin condensation and DSB repair. Also promotes DSB repair by promoting H3K18Ac deacetylation, regulating non-homologous end joining (NHEJ). Along with its role in DNA repair, required for chromosome synapsis during prophase I of female meiosis by catalyzing H3K18Ac deacetylation. Involved in transcriptional repression of LINE-1 retrotransposon via H3K18Ac deacetylation, and promotes their association with the nuclear lamina. Required to stabilize ribosomal DNA (rDNA) heterochromatin and prevent cellular senescence induced by rDNA instability. Acts as a negative regulator of SIRT1 by preventing autodeacetylation of SIRT1, restricting SIRT1 deacetylase activity. This Rattus norvegicus (Rat) protein is NAD-dependent protein deacetylase sirtuin-7.